A 507-amino-acid polypeptide reads, in one-letter code: Transcription factor SOX-9 (507 aa).

Disordered regions lie at residues 1–67 (MNLL…SEED) and 160–250 (RLRV…AGKV). Residues 30 to 41 (SAGSPCPSGSGS) show a composition bias toward low complexity. Polar residues predominate over residues 42-52 (DTENTRPQENT). 2 stretches are compositionally biased toward basic and acidic residues: residues 56–67 (GEPDLKKESEED) and 160–174 (RLRV…DYKY). Residues 63-103 (ESEEDKFPVCIREAVSQVLKGYDWTLVPMPVRVNGSSKNKP) form a dimerization (DIM) region. The tract at residues 63–103 (ESEEDKFPVCIREAVSQVLKGYDWTLVPMPVRVNGSSKNKP) is PQA. The residue at position 64 (Ser-64) is a Phosphoserine; by PKA. Residues 105 to 173 (VKRPMNAFMV…QHKKDHPDYK (69 aa)) constitute a DNA-binding region (HMG box). The residue at position 211 (Ser-211) is a Phosphoserine; by PKA. Residues 224-307 (PGEHSGQSQG…LPPNGHPGVP (84 aa)) are transactivation domain (TAM). 2 consecutive short sequence motifs (9aaTAD) follow at residues 275–284 (IGELSSDVIS) and 290–298 (DVNEFDQYL). The interval 335–429 (WMSKQQAPPP…PFNLPHYSPS (95 aa)) is disordered. Residues 341–369 (APPPPPQQPPQAPQAPQAPPQQQAPPQQP) are compositionally biased toward pro residues. Over residues 378–420 (HTLTTLSSEPGQSQRTHIKTEQLSPSHYSEQQQHSPQQISYSP) the composition is skewed to polar residues. Positions 392–507 (RTHIKTEQLS…QPVYTQLTRP (116 aa)) are transactivation domain (TAC). A Glycyl lysine isopeptide (Lys-Gly) (interchain with G-Cter in ubiquitin) cross-link involves residue Lys-396. The short motif at 458 to 466 (SGLYSTFTY) is the 9aaTAD 3 element. Positions 477-507 (PIADTSGVPSIPQTHSPQHWEQPVYTQLTRP) are disordered. A compositionally biased stretch (polar residues) spans 483–507 (GVPSIPQTHSPQHWEQPVYTQLTRP).

Homodimer; homodimerization is required for activity. Interacts (via C-terminus) with ZNF219; forming a complex that binds to the COL2A1 promoter and activates COL2A1 expression. Interacts with DDRGK1. Interacts with EP300/p300. Interacts with beta-catenin (CTNNB1); inhibiting CTNNB1 activity by competing with the binding sites of TCF/LEF within CTNNB1. In terms of processing, acetylated; acetylation impairs nuclear localization and ability to transactivate expression of target genes. Deacetylated by SIRT1. Phosphorylation at Ser-64 and Ser-211 by PKA increases transcriptional activity and may help delay chondrocyte maturation downstream of PTHLH/PTHrP signaling. Phosphorylation at either Ser-64 or Ser-211 is required for sumoylation, but phosphorylation is not dependent on sumoylation. Phosphorylated on tyrosine residues; tyrosine dephosphorylation by PTPN11/SHP2 blocks SOX9 phosphorylation by PKA and subsequent SUMOylation. Post-translationally, sumoylated; phosphorylation at either Ser-64 or Ser-211 is required for sumoylation. Sumoylation is induced by BMP signaling pathway. In terms of processing, ubiquitinated; ubiquitination leads to proteasomal degradation and is negatively regulated by DDRGK1. As to expression, expressed in the intestinal epithelium (at protein level). Expressed in progenitor cells in various organs, including chondroprogenitors, osteoprogenitors and preadipocytes, but is not expressed in most differentiated cell types such as osteoblasts and adipocytes, with the exception of chondrocytes. Highly expressed in developing chondrogenic tissues. Also expressed in some non-chondrogenic tissues such as notochord, otic vesicle and neural tube.

Its subcellular location is the nucleus. Its function is as follows. Transcription factor that plays a key role in chondrocytes differentiation and skeletal development. Specifically binds the 5'-ACAAAG-3' DNA motif present in enhancers and super-enhancers and promotes expression of genes important for chondrogenesis, including cartilage matrix protein-coding genes COL2A1, COL4A2, COL9A1, COL11A2 and ACAN, SOX5 and SOX6. Also binds to some promoter regions. Plays a central role in successive steps of chondrocyte differentiation. Absolutely required for precartilaginous condensation, the first step in chondrogenesis during which skeletal progenitors differentiate into prechondrocytes. Together with SOX5 and SOX6, required for overt chondrogenesis when condensed prechondrocytes differentiate into early stage chondrocytes, the second step in chondrogenesis. Later, required to direct hypertrophic maturation and block osteoblast differentiation of growth plate chondrocytes: maintains chondrocyte columnar proliferation, delays prehypertrophy and then prevents osteoblastic differentiation of chondrocytes by lowering beta-catenin (CTNNB1) signaling and RUNX2 expression. Also required for chondrocyte hypertrophy, both indirectly, by keeping the lineage fate of chondrocytes, and directly, by remaining present in upper hypertrophic cells and transactivating COL10A1 along with MEF2C. Low lipid levels are the main nutritional determinant for chondrogenic commitment of skeletal progenitor cells: when lipids levels are low, FOXO (FOXO1 and FOXO3) transcription factors promote expression of SOX9, which induces chondrogenic commitment and suppresses fatty acid oxidation. Mechanistically, helps, but is not required, to remove epigenetic signatures of transcriptional repression and deposit active promoter and enhancer marks at chondrocyte-specific genes. Acts in cooperation with the Hedgehog pathway-dependent GLI (GLI1 and GLI3) transcription factors. In addition to cartilage development, also acts as a regulator of proliferation and differentiation in epithelial stem/progenitor cells: involved in the lung epithelium during branching morphogenesis, by balancing proliferation and differentiation and regulating the extracellular matrix. Controls epithelial branching during kidney development. This Mus musculus (Mouse) protein is Transcription factor SOX-9.